A 590-amino-acid polypeptide reads, in one-letter code: Ovarian abundant message protein (590 aa).

Residues 1–71 (MQGTDNAPPG…SPGQPLVEEQ (71 aa)) are disordered. Residues 18–29 (SPRRIRHVRRHY) show a composition bias toward basic residues. Repeat copies occupy residues 66–71 (PLVEEQ), 72–77 (PLVEER), 78–83 (PPVEEQ), 84–89 (PLVEEQ), 90–95 (PLVEEQ), 96–101 (PLVEEQ), 102–107 (PLVEEQ), 108–113 (PLVEGQ), 114–119 (PLVEEQ), 120–125 (PLVEGQ), 126–131 (PPVEGQ), 132–137 (PLVEEQ), 138–143 (PLVEGQ), 144–149 (PLVEGQ), 150–155 (PLVEGQ), 156–161 (PLVEGQ), 162–167 (PLVGGQ), 168–173 (PLVGGQ), 174–179 (PLVEGQ), 180–185 (PLVEGQ), 300–305 (PLAGAP), 306–311 (PLAGVP), 312–317 (PLAVAL), 318–323 (PLAGAP), 324–329 (PLAGVP), 330–335 (PLAGAP), and 336–341 (PLAGAL). The tract at residues 66–185 (PLVEEQPLVE…VEGQPLVEGQ (120 aa)) is 20 X 6 AA tandem repeats of P-[LP]-V-[EG]-[EG]-[QR]. An 8 X 6 AA approximate tandem repeats of P-L-A-[GV]-[AV]-[PL] region spans residues 300–347 (PLAGAPPLAGVPPLAVALPLAGAPPLAGVPPLAGAPPLAGALPRAGVL). A 2-8; approximate repeat occupies 342–347 (PRAGVL). 16 repeat units span residues 348 to 353 (RRAGVL), 354 to 359 (RRAGVL), 360 to 365 (RRAGVL), 366 to 371 (RRAGVL), 372 to 377 (RRAGVL), 378 to 383 (RRAGVL), 384 to 389 (RRAGVL), 390 to 395 (RRAGVL), 396 to 401 (RRAGVL), 402 to 407 (RRADVL), 408 to 413 (RRADVV), 419 to 424 (QQLADV), 425 to 430 (QRLADV), 431 to 436 (QRLADV), 437 to 442 (QRLADV), and 443 to 448 (QRLADV). Residues 348 to 413 (RRAGVLRRAG…ADVLRRADVV (66 aa)) form an 11 X 6 AA tandem repeats of approximate R-R-A-[GD]-V-[LV] region. A 6 X 6 AA approximate tandem repeats of Q-[QR]-L-A-D-V region spans residues 419 to 454 (QQLADVQRLADVQRLADVQRLADVQRLADVQRLVCV). One copy of the 4-6; approximate repeat lies at 449 to 454 (QRLVCV).

As to expression, somatic ovarian tissue.

The polypeptide is Ovarian abundant message protein (OAM) (Ascaris suum (Pig roundworm)).